An 839-amino-acid polypeptide reads, in one-letter code: Autophagy-related protein 9A (839 aa).

At alanine 2 the chain carries N-acetylalanine. Topologically, residues 2–61 (AQFDTEYQRLEASYSDSPPGEEDLLVHVAEGSKSPWHHIENLDLFFSRVYNLHQKNGFTC) are cytoplasmic. The Tyrosine-based sorting signal motif lies at 8–11 (YQRL). Phosphoserine is present on residues serine 14, serine 16, and serine 18. A helical transmembrane segment spans residues 62-84 (MLIGEIFELMQFLFVVAFTTFLV). The Lumenal segment spans residues 85–128 (SCVDYDILFANKMVNHSLHPTEPVKVTLPDAFLPAQVCSARIQE). Asparagine 99 carries an N-linked (GlcNAc...) asparagine glycan. The chain crosses the membrane as a helical span at residues 129–154 (NGSLITILVIAGVFWIHRLIKFIYNI). Over 155–290 (CCYWEIHSFY…ELAQRLSNRI (136 aa)) the chain is Cytoplasmic. Residues 291 to 301 (LWIGIANFLLC) lie within the membrane without spanning it. The Cytoplasmic segment spans residues 302-319 (PLILIWQILYAFFSYAEV). An intramembrane segment occupies 320–328 (LKREPGALG). Over 329-371 (ARCWSLYGRCYLRHFNELEHELQSRLNRGYKPASKYMNCFLSP) the chain is Cytoplasmic. Residues 372-397 (LLTLLAKNGAFFAGSILAVLIALTIY) form a helical membrane-spanning segment. The Lumenal segment spans residues 398 to 406 (DEDVLAVEH). The helical transmembrane segment at 407–424 (VLTTVTLLGVTVTVCRSF) threads the bilayer. Residues 425–470 (IPDQHMVFCPEQLLRVILAHIHYMPDHWQGNAHRSQTRDEFAQLFQ) are Cytoplasmic-facing. Residues 471–480 (YKAVFILEEL) lie within the membrane without spanning it. Topologically, residues 481 to 483 (LSP) are cytoplasmic. An intramembrane segment occupies 484–492 (IVTPLILIF). Topologically, residues 493-839 (CLRPRALEII…DELPPQVHKV (347 aa)) are cytoplasmic. A phosphoserine mark is found at serine 656, serine 735, serine 738, serine 741, and serine 828. 2 disordered regions span residues 656–689 (SPLQPGQAPQGRVPSTMTGSGVDARTASSGSSVW) and 717–839 (HKQQ…VHKV). Over residues 724-736 (EPERHVWHRRESD) the composition is skewed to basic and acidic residues. Composition is skewed to acidic residues over residues 737–747 (ESGESAPEEGG) and 823–832 (VPEEGSEDEL).

It belongs to the ATG9 family. In terms of assembly, homotrimer; forms a homotrimer with a central pore that forms a path between the two membrane leaflets. Interacts (via cytoplasmic its C-terminus) with ATG2A. Interacts with SUPT20H. Interacts (via the tyrosine-based sorting signal motif) with AP4M1; promoting association with the AP-4 complex. Interacts with ARFIP1 and ARFIP2. Interacts with PI4K2A and PI4KB. Interacts with ATG4A; the interaction is direct and promotes ATG9A trafficking. Ufmylated in a DDRGK1 dependent manner.

Its subcellular location is the preautophagosomal structure membrane. The protein localises to the cytoplasmic vesicle. It localises to the autophagosome membrane. The protein resides in the golgi apparatus. It is found in the trans-Golgi network membrane. Its subcellular location is the late endosome membrane. The protein localises to the recycling endosome membrane. It localises to the endoplasmic reticulum membrane. The protein resides in the mitochondrion membrane. It carries out the reaction a 1,2-diacyl-sn-glycero-3-phosphocholine(in) = a 1,2-diacyl-sn-glycero-3-phosphocholine(out). The catalysed reaction is a 1,2-diacyl-sn-glycero-3-phospho-L-serine(in) = a 1,2-diacyl-sn-glycero-3-phospho-L-serine(out). The enzyme catalyses a 1,2-diacyl-sn-glycero-3-phosphoethanolamine(in) = a 1,2-diacyl-sn-glycero-3-phosphoethanolamine(out). Its function is as follows. Phospholipid scramblase involved in autophagy by mediating autophagosomal membrane expansion. Cycles between the preautophagosomal structure/phagophore assembly site (PAS) and the cytoplasmic vesicle pool and supplies membrane for the growing autophagosome. Lipid scramblase activity plays a key role in preautophagosomal structure/phagophore assembly by distributing the phospholipids that arrive through ATG2 (ATG2A or ATG2B) from the cytoplasmic to the luminal leaflet of the bilayer, thereby driving autophagosomal membrane expansion. Also required to supply phosphatidylinositol 4-phosphate to the autophagosome initiation site by recruiting the phosphatidylinositol 4-kinase beta (PI4KB) in a process dependent on ARFIP2, but not ARFIP1. In addition to autophagy, also plays a role in necrotic cell death. The protein is Autophagy-related protein 9A of Rattus norvegicus (Rat).